The sequence spans 664 residues: DNA ligase (664 aa).

NAD(+) contacts are provided by residues 32–36 and 80–81; these read DKEYD and SL. Residue lysine 122 is the N6-AMP-lysine intermediate of the active site. Residues arginine 144, glutamate 178, and lysine 314 each coordinate NAD(+). The Zn(2+) site is built by cysteine 407, cysteine 410, cysteine 423, and cysteine 429. One can recognise a BRCT domain in the interval 587-664; it reads IDENPFMDKT…NEEEFSNKIK (78 aa).

Belongs to the NAD-dependent DNA ligase family. LigA subfamily. Requires Mg(2+) as cofactor. The cofactor is Mn(2+).

It catalyses the reaction NAD(+) + (deoxyribonucleotide)n-3'-hydroxyl + 5'-phospho-(deoxyribonucleotide)m = (deoxyribonucleotide)n+m + AMP + beta-nicotinamide D-nucleotide.. DNA ligase that catalyzes the formation of phosphodiester linkages between 5'-phosphoryl and 3'-hydroxyl groups in double-stranded DNA using NAD as a coenzyme and as the energy source for the reaction. It is essential for DNA replication and repair of damaged DNA. In Clostridium botulinum (strain Okra / Type B1), this protein is DNA ligase.